The primary structure comprises 948 residues: RNA polymerase-associated protein RapA (948 aa).

The region spanning 164–332 (EVADRIAPRV…FARLRLLDPN (169 aa)) is the Helicase ATP-binding domain. An ATP-binding site is contributed by 177 to 184 (DEVGLGKT). The DEAH box motif lies at 278 to 281 (DEAH). A Helicase C-terminal domain is found at 473-627 (RVEWLIDQLK…TCPTGNALQH (155 aa)).

This sequence belongs to the SNF2/RAD54 helicase family. RapA subfamily. As to quaternary structure, interacts with the RNAP. Has a higher affinity for the core RNAP than for the holoenzyme. Its ATPase activity is stimulated by binding to RNAP.

Functionally, transcription regulator that activates transcription by stimulating RNA polymerase (RNAP) recycling in case of stress conditions such as supercoiled DNA or high salt concentrations. Probably acts by releasing the RNAP, when it is trapped or immobilized on tightly supercoiled DNA. Does not activate transcription on linear DNA. Probably not involved in DNA repair. This Pseudomonas fluorescens (strain Pf0-1) protein is RNA polymerase-associated protein RapA.